The sequence spans 165 residues: Large ribosomal subunit protein uL15 (165 aa).

Residues 1–29 show a composition bias toward basic residues; sequence MTSKKKRQRGSRTHGGGSHKNRRGAGHRG. 2 disordered regions span residues 1–59 and 133–165; these read MTSK…QKVQ and KVEG…ADEE. Positions 30–47 are enriched in basic and acidic residues; sequence GRGDAGRDKHEFHNHEPL. Acidic residues predominate over residues 154-165; sequence AEETEDADADEE.

It belongs to the universal ribosomal protein uL15 family. Part of the 50S ribosomal subunit. Interacts weakly with proteins L18e and L32e.

In terms of biological role, binds to the 23S rRNA. The protein is Large ribosomal subunit protein uL15 (rpl15) of Haloarcula marismortui (strain ATCC 43049 / DSM 3752 / JCM 8966 / VKM B-1809) (Halobacterium marismortui).